Here is a 192-residue protein sequence, read N- to C-terminus: Peptidyl-prolyl cis-trans isomerase 1 (192 aa).

One can recognise a PPIase cyclophilin-type domain in the interval 25 to 188; that stretch reads FFDVSIGEEP…KTVTIADCGE (164 aa).

It belongs to the cyclophilin-type PPIase family.

The enzyme catalyses [protein]-peptidylproline (omega=180) = [protein]-peptidylproline (omega=0). Its function is as follows. PPIases accelerate the folding of proteins. It catalyzes the cis-trans isomerization of proline imidic peptide bonds in oligopeptides. The polypeptide is Peptidyl-prolyl cis-trans isomerase 1 (cyn-1) (Caenorhabditis elegans).